The chain runs to 190 residues: Natural killer cells antigen CD94 (190 aa).

Topologically, residues 1–10 (MAAFRTTAWR) are cytoplasmic. A helical; Signal-anchor for type II membrane protein transmembrane segment spans residues 11 to 31 (LISGVLGVICLVLMAALGVLL). Topologically, residues 32–190 (KNSLTKRSVQ…FRYICKQQLI (159 aa)) are extracellular. Disulfide bonds link Cys69-Cys81, Cys72-Cys83, Cys100-Cys185, and Cys163-Cys177. A C-type lectin domain is found at 79 to 186 (YQCNCYFISN…CEKKFRYICK (108 aa)). 2 N-linked (GlcNAc...) asparagine glycosylation sites follow: Asn104 and Asn144.

In terms of assembly, can form disulfide-bonded heterodimer with NKG2 family members KLRC1 and KLRC2. KLRD1-KLRC1 heterodimer interacts with peptide-bound MHC-E-B2M heterotrimeric complex. KLRD1 plays a prominent role in directly interacting with MHC-E. KLRD1-KLRC1 interacts with much higher affinity with peptide-bound MHC-E-B2M than KLRD1-KLRC2. Interacts with the adapter protein TYROBP/DAP12; this interaction is required for cell surface expression and cell activation.

The protein resides in the cell membrane. Immune receptor involved in self-nonself discrimination. In complex with KLRC1 or KLRC2 on cytotoxic and regulatory lymphocyte subsets, recognizes non-classical major histocompatibility (MHC) class Ib molecule MHC-E loaded with self-peptides derived from the signal sequence of classical MHC class Ia and non-classical MHC class Ib molecules. Enables cytotoxic cells to monitor the expression of MHC class I molecules in healthy cells and to tolerate self. Primarily functions as a ligand binding subunit as it lacks the capacity to signal. Its function is as follows. KLRD1-KLRC1 acts as an immune inhibitory receptor. Key inhibitory receptor on natural killer (NK) cells that regulates their activation and effector functions. Dominantly counteracts T cell receptor signaling on a subset of memory/effector CD8-positive T cells as part of an antigen-driven response to avoid autoimmunity. On intraepithelial CD8-positive gamma-delta regulatory T cells triggers TGFB1 secretion, which in turn limits the cytotoxic programming of intraepithelial CD8-positive alpha-beta T cells, distinguishing harmless from pathogenic antigens. In MHC-E-rich tumor microenvironment, acts as an immune inhibitory checkpoint and may contribute to progressive loss of effector functions of NK cells and tumor-specific T cells, a state known as cell exhaustion. Upon MHC-E-peptide binding, transmits intracellular signals through KLRC1 immunoreceptor tyrosine-based inhibition motifs (ITIMs) by recruiting INPP5D/SHIP-1 and INPPL1/SHIP-2 tyrosine phosphatases to ITIMs, and ultimately opposing signals transmitted by activating receptors through dephosphorylation of proximal signaling molecules. In terms of biological role, KLRD1-KLRC2 acts as an immune activating receptor. On cytotoxic lymphocyte subsets recognizes MHC-E loaded with signal sequence-derived peptides from non-classical MHC class Ib MHC-G molecules, likely playing a role in the generation and effector functions of adaptive NK cells and in maternal-fetal tolerance during pregnancy. Regulates the effector functions of terminally differentiated cytotoxic lymphocyte subsets, and in particular may play a role in adaptive NK cell response to viral infection. Upon MHC-E-peptide binding, transmits intracellular signals via the adapter protein TYROBP/DAP12, triggering the phosphorylation of proximal signaling molecules and cell activation. This chain is Natural killer cells antigen CD94 (KLRD1), found in Bos taurus (Bovine).